The chain runs to 311 residues: Class E basic helix-loop-helix protein 22 (311 aa).

The disordered stretch occupies residues 22 to 170 (AKRMESAFRS…GGSKKSKEQK (149 aa)). The segment covering 81–96 (GESASRSSVAESSGGE) has biased composition (low complexity). A compositionally biased stretch (gly residues) spans 125 to 147 (AGGGGGGGGGGGGGPGGGGGGGL). One can recognise a bHLH domain in the interval 171–225 (ALRLNINARERRRMHDLNDALDELRAVIPYAHSPSVRKLSKIATLLLAKNYILMQ).

The protein resides in the nucleus. In terms of biological role, may act as a transcriptional repressor. The chain is Class E basic helix-loop-helix protein 22 (BHLHE22) from Gallus gallus (Chicken).